The primary structure comprises 236 residues: 2-C-methyl-D-erythritol 4-phosphate cytidylyltransferase (236 aa).

The protein belongs to the IspD/TarI cytidylyltransferase family. IspD subfamily. In terms of assembly, homodimer.

It catalyses the reaction 2-C-methyl-D-erythritol 4-phosphate + CTP + H(+) = 4-CDP-2-C-methyl-D-erythritol + diphosphate. The protein operates within isoprenoid biosynthesis; isopentenyl diphosphate biosynthesis via DXP pathway; isopentenyl diphosphate from 1-deoxy-D-xylulose 5-phosphate: step 2/6. Catalyzes the formation of 4-diphosphocytidyl-2-C-methyl-D-erythritol from CTP and 2-C-methyl-D-erythritol 4-phosphate (MEP). The sequence is that of 2-C-methyl-D-erythritol 4-phosphate cytidylyltransferase from Salmonella newport (strain SL254).